The sequence spans 211 residues: Protein-methionine-sulfoxide reductase heme-binding subunit MsrQ (211 aa).

The next 4 helical transmembrane spans lie at 10–30 (WLKVCLHLAGLLPFLWLVWAI), 82–102 (LWCFAWATLHLTSYALLELGV), 116–136 (PYLTLGIISWIILLALAFTST), and 153–173 (FVYLVAILAPIHYLWSVKIIS).

It belongs to the MsrQ family. As to quaternary structure, heterodimer of a catalytic subunit (MsrP) and a heme-binding subunit (MsrQ). Requires FMN as cofactor. Heme b serves as cofactor.

The protein resides in the cell inner membrane. In terms of biological role, part of the MsrPQ system that repairs oxidized periplasmic proteins containing methionine sulfoxide residues (Met-O), using respiratory chain electrons. Thus protects these proteins from oxidative-stress damage caused by reactive species of oxygen and chlorine generated by the host defense mechanisms. MsrPQ is essential for the maintenance of envelope integrity under bleach stress, rescuing a wide series of structurally unrelated periplasmic proteins from methionine oxidation, including the primary periplasmic chaperone SurA and the lipoprotein Pal. MsrQ provides electrons for reduction to the reductase catalytic subunit MsrP, using the quinone pool of the respiratory chain. The polypeptide is Protein-methionine-sulfoxide reductase heme-binding subunit MsrQ (Escherichia coli O157:H7).